Consider the following 102-residue polypeptide: Small ribosomal subunit protein uS10 (102 aa).

It belongs to the universal ribosomal protein uS10 family. Part of the 30S ribosomal subunit.

Functionally, involved in the binding of tRNA to the ribosomes. The sequence is that of Small ribosomal subunit protein uS10 from Geobacter metallireducens (strain ATCC 53774 / DSM 7210 / GS-15).